Here is a 157-residue protein sequence, read N- to C-terminus: Transcriptional regulator MraZ (157 aa).

2 SpoVT-AbrB domains span residues 7–52 and 83–126; these read TYTM…AGGN and SETL…EPER.

This sequence belongs to the MraZ family. In terms of assembly, forms oligomers.

Its subcellular location is the cytoplasm. The protein resides in the nucleoid. This is Transcriptional regulator MraZ from Xanthobacter autotrophicus (strain ATCC BAA-1158 / Py2).